The sequence spans 481 residues: Phosphoglycerate kinase, chloroplastic (481 aa).

The N-terminal 75 residues, 1-75 (MASATASHTL…SSKPIRGVAS (75 aa)), are a transit peptide targeting the chloroplast. (2R)-3-phosphoglycerate contacts are provided by A98, D99, N101, R115, S137, H138, G140, R141, R196, H228, and R229. G274 is an ADP binding site. G274 is a CDP binding site. AMP is bound by residues K276 and K280. Residue K280 participates in ATP binding. Position 298 (G298) interacts with ADP. Residue G298 participates in CDP binding. 2 residues coordinate AMP: G299 and G371. ATP-binding residues include G299 and G371. Positions 396 and 401 each coordinate CDP. F401 contributes to the ADP binding site. E402 lines the AMP pocket. Residues E402, D433, and S434 each coordinate ATP. Mg(2+) is bound at residue D433.

This sequence belongs to the phosphoglycerate kinase family. In terms of assembly, monomer. Mg(2+) is required as a cofactor.

It is found in the plastid. Its subcellular location is the chloroplast. It carries out the reaction (2R)-3-phosphoglycerate + ATP = (2R)-3-phospho-glyceroyl phosphate + ADP. The protein operates within carbohydrate biosynthesis; Calvin cycle. This is Phosphoglycerate kinase, chloroplastic from Nicotiana tabacum (Common tobacco).